Reading from the N-terminus, the 457-residue chain is Nuclear hormone receptor family member nhr-20 (457 aa).

The segment at residues 16–92 is a DNA-binding region (nuclear receptor); that stretch reads TSKCLVCEHP…AGMRRECVQK (77 aa). 2 consecutive NR C4-type zinc fingers follow at residues 19-40 and 56-80; these read CLVCEHPDGGSAHFGSTSCLAC and CKKDKNCVIFHELRMICRACRFDKC. Residues 125 to 182 are disordered; sequence GDQTDDNSPLSIEKKSPPGLLPNDSPMMADFKFDPSDIPSTSGGSTQRLERSPSPKLA. Polar residues predominate over residues 162 to 171; it reads IPSTSGGSTQ. Residues 201 to 457 form the NR LBD domain; it reads QLKNSMDRRR…DALSKSLLTL (257 aa).

It belongs to the nuclear hormone receptor family.

Its subcellular location is the nucleus. Its function is as follows. Orphan nuclear receptor. The polypeptide is Nuclear hormone receptor family member nhr-20 (nhr-20) (Caenorhabditis elegans).